Reading from the N-terminus, the 844-residue chain is Janus kinase and microtubule-interacting protein 3 (844 aa).

The stretch at 8 to 259 (SRAKGDKAET…LSQAKEAERH (252 aa)) forms a coiled coil. Positions 249–290 (QLSQAKEAERHPGSPRRELPYASGAGDASDHSGSPEQQLDEK) are disordered. A compositionally biased stretch (basic and acidic residues) spans 254–267 (KEAERHPGSPRREL). Residues 270–282 (ASGAGDASDHSGS) are compositionally biased toward low complexity. A coiled-coil region spans residues 289-421 (EKDARRFQLK…DELSKTLETA (133 aa)). Ser384 carries the post-translational modification Phosphoserine. The segment covering 466 to 483 (SDGSSISYQTDRTDQTPC) has biased composition (polar residues). The disordered stretch occupies residues 466–488 (SDGSSISYQTDRTDQTPCTPEDD). Coiled coils occupy residues 493–621 (MAKE…RERK) and 688–833 (EKWL…LFLF).

It belongs to the JAKMIP family.

Its subcellular location is the golgi apparatus. The protein is Janus kinase and microtubule-interacting protein 3 (Jakmip3) of Mus musculus (Mouse).